The following is a 302-amino-acid chain: Serine/threonine-protein phosphatase alpha-3 isoform (302 aa).

Asp-62, His-64, Asp-90, and Asn-122 together coordinate Mn(2+). The Proton donor role is filled by His-123. Positions 171 and 246 each coordinate Mn(2+).

Belongs to the PPP phosphatase family. PP-1 subfamily. In terms of assembly, interacts with Nop17l. It depends on Mn(2+) as a cofactor.

It carries out the reaction O-phospho-L-seryl-[protein] + H2O = L-seryl-[protein] + phosphate. It catalyses the reaction O-phospho-L-threonyl-[protein] + H2O = L-threonyl-[protein] + phosphate. In Drosophila melanogaster (Fruit fly), this protein is Serine/threonine-protein phosphatase alpha-3 isoform (Pp1-13C).